The sequence spans 727 residues: Zinc metalloproteinase nas-38 (727 aa).

Positions 1–25 (MPSPSYNRHIIIASCFCCLLIFSSA) are cleaved as a signal peptide. The propeptide occupies 26 to 114 (ARVPKASKKH…FTQGKREKRK (89 aa)). The 200-residue stretch at 113–312 (RKIGRNPLYK…QAINMAYGCT (200 aa)) folds into the Peptidase M12A domain. Intrachain disulfides connect Cys-158–Cys-311 and Cys-179–Cys-199. His-207 contributes to the Zn(2+) binding site. Glu-208 is a catalytic residue. Residues His-211 and His-217 each coordinate Zn(2+). The EGF-like domain occupies 306-345 (NMAYGCTESCADLPCLRNGYTHPNNCSMCACPEGLSGRYC). An N-linked (GlcNAc...) asparagine glycan is attached at Asn-330. A CUB domain is found at 353 to 469 (AQCGGVIFAT…AGFKAKFWSN (117 aa)). Cystine bridges form between Cys-355–Cys-383 and Cys-411–Cys-432. Disordered stretches follow at residues 473 to 506 (PEGV…QSTT) and 532 to 561 (TPLT…TEPS). Positions 535–554 (TSSSTTTESTTVSSTTQSTT) are enriched in low complexity. The 49-residue stretch at 610-658 (ECGCGAWSEWQGECSQQCGGCGHRLRKRECKKEACRKEEKRPCNFSACP) folds into the TSP type-1 domain. Intrachain disulfides connect Cys-611-Cys-644, Cys-623-Cys-652, Cys-627-Cys-657, and Cys-639-Cys-644. Residues Asn-653 and Asn-714 are each glycosylated (N-linked (GlcNAc...) asparagine).

Requires Zn(2+) as cofactor. Expressed in the epidermis, the excretory canal cell, duct cell, pore cell, and excretory gland cell. Expressed in an oscillating pattern in epithelial cells with increased expression during the lethargus phase which occurs during molting between larval and adult stages. Not expressed in seam cells or in the RIS neuron.

The protein localises to the secreted. In terms of biological role, metalloprotease. As part of the innate immune response to molting and injury to the adult epidermis, positively regulates the activity of the transcription factor sta-2 to promote the expression of epidermal antimicrobial peptides such as nlp-29. Through regulating the expression of epidermal antimicrobial peptides such as nlp-29, modulates sleep duration and locomotion quiescence during the sleep-like state called lethargus which occurs during molting between larval and adult stages. This may occur through the sleep-active RIS neuron. This chain is Zinc metalloproteinase nas-38, found in Caenorhabditis elegans.